The primary structure comprises 138 residues: Cysteine desulfuration protein SufE (138 aa).

Cys51 serves as the catalytic Cysteine persulfide intermediate.

It belongs to the SufE family. In terms of assembly, homodimer. Interacts with SufS.

It localises to the cytoplasm. Its pathway is cofactor biosynthesis; iron-sulfur cluster biosynthesis. Its function is as follows. Participates in cysteine desulfuration mediated by SufS. Cysteine desulfuration mobilizes sulfur from L-cysteine to yield L-alanine and constitutes an essential step in sulfur metabolism for biosynthesis of a variety of sulfur-containing biomolecules. Functions as a sulfur acceptor for SufS, by mediating the direct transfer of the sulfur atom from the S-sulfanylcysteine of SufS, an intermediate product of cysteine desulfuration process. In Salmonella choleraesuis (strain SC-B67), this protein is Cysteine desulfuration protein SufE.